The chain runs to 248 residues: PF03932 family protein CutC (248 aa).

Belongs to the CutC family. In terms of assembly, homodimer.

The protein resides in the cytoplasm. The chain is PF03932 family protein CutC from Salmonella schwarzengrund (strain CVM19633).